The primary structure comprises 359 residues: tRNA N6-adenosine threonylcarbamoyltransferase (359 aa).

Fe cation contacts are provided by H121 and H125. Residues 143-147, D176, G189, and N286 contribute to the substrate site; that span reads LVSGG. Residue D311 coordinates Fe cation.

This sequence belongs to the KAE1 / TsaD family. Requires Fe(2+) as cofactor.

It is found in the cytoplasm. It carries out the reaction L-threonylcarbamoyladenylate + adenosine(37) in tRNA = N(6)-L-threonylcarbamoyladenosine(37) in tRNA + AMP + H(+). In terms of biological role, required for the formation of a threonylcarbamoyl group on adenosine at position 37 (t(6)A37) in tRNAs that read codons beginning with adenine. Is involved in the transfer of the threonylcarbamoyl moiety of threonylcarbamoyl-AMP (TC-AMP) to the N6 group of A37, together with TsaE and TsaB. TsaD likely plays a direct catalytic role in this reaction. The sequence is that of tRNA N6-adenosine threonylcarbamoyltransferase from Jannaschia sp. (strain CCS1).